A 514-amino-acid polypeptide reads, in one-letter code: uncharacterized protein (514 aa).

The protein to E.coli YjjI.

This is an uncharacterized protein from Haemophilus influenzae (strain ATCC 51907 / DSM 11121 / KW20 / Rd).